A 44-amino-acid polypeptide reads, in one-letter code: uncharacterized protein (44 aa).

An N-terminal signal peptide occupies residues 1 to 16 (MRISLLAVILALLFVA).

This is an uncharacterized protein from Helicobacter pylori (strain ATCC 700392 / 26695) (Campylobacter pylori).